A 249-amino-acid polypeptide reads, in one-letter code: Exosome complex component Rrp4 (249 aa).

The 72-residue stretch at 73–144 folds into the S1 motif domain; that stretch reads NDIVIGLVED…RSIDPVLSVK (72 aa). One can recognise a KH domain in the interval 154-211; sequence GIVIDIMPVKVPRVIGKNKSMYETLTSKSGCSIFVANNGRIWATCPSRFSEEILIEAI.

It belongs to the RRP4 family. In terms of assembly, component of the archaeal exosome complex. Forms a trimer of Rrp4 and/or Csl4 subunits. The trimer associates with a hexameric ring-like arrangement composed of 3 Rrp41-Rrp42 heterodimers.

It localises to the cytoplasm. Its function is as follows. Non-catalytic component of the exosome, which is a complex involved in RNA degradation. Increases the RNA binding and the efficiency of RNA degradation. Confers strong poly(A) specificity to the exosome. This is Exosome complex component Rrp4 from Saccharolobus solfataricus (strain ATCC 35092 / DSM 1617 / JCM 11322 / P2) (Sulfolobus solfataricus).